Consider the following 451-residue polypeptide: Prenyltransferase anuH (451 aa).

Dimethylallyl diphosphate is bound by residues Arg-105, Lys-189, Tyr-191, Lys-257, Tyr-259, and Tyr-422.

The protein belongs to the tryptophan dimethylallyltransferase family.

The catalysed reaction is (8S)-annullatin E + dimethylallyl diphosphate = (8S)-annullatin J + diphosphate. It functions in the pathway secondary metabolite biosynthesis. Its function is as follows. Cytochrome P450 monooxygenase; part of the gene cluster that mediates the biosynthesis of annullatin D, an alkylated aromatic polyketide with a fused dihydrobenzofuran lactone ring system that exhibits potent agonistic activities toward the cannabinoid receptors. Within the pathway, anuH uses dimethylallyl diphosphate (DMAPP) to prenylate (8S)-annullatin E to produce (8S)-annullatin J. Geranyl and farnesyl diphosphate are not consumed by anuH for prenylation. 2-hydroxymethyl-3-pentylphenol, without the hydroxyl group at the side chain, is also accepted by anuH, but only with low conversion yield. The annullatin backbone 2-hydroxymethyl-3-pentylphenol is assembled from one acetyl-CoA starter unit and 5 malonyl-CoA elongation units by cooperation of the highly reducing polyketide synthase anuA, the short-chain dehydrogenase anuB and the oxidoreductase anuC, before being hydroxylated at the C-5 alkyl chain by the cytochrome P450 monooxygenase anuE to form (8S)-annullatin E. The prenyltransferase anuH subsequently installs one isoprenyl group at the benzene ring to form (8S)-annullatin J. Enzymatic or nonenzymatic dihydro-benzofuran ring formation between the prenyl and the phenolic hydroxyl groups in (8S)-annullatin J results in two diastereomers (2S,9S)-annullatin H and compound 12. The intermediate (2S,9S)-annullatin H is then converted to (2S,9S)-annullatin D by the FAD-linked oxidoreductase anuG-catalyzed five-member lactone ring formation. The isomer 12 acts as a substrate for the short-chain dehydrogenase anuF and is oxidized to (2R)-annullatin F, which is subsequently acetylated by an acetyltransferase leading to (2R)-annullatin G formation. The remaining enzymes identified within the cluster, anuD, anuI and anuJ, seem not to be involved in annullatin biosynthesis. This is Prenyltransferase anuH from Penicillium roqueforti (strain FM164).